Here is a 275-residue protein sequence, read N- to C-terminus: Homeobox protein Hox-C12a (275 aa).

Disordered stretches follow at residues 101 to 129 (SREN…DHGM) and 148 to 213 (QLTQ…KRKP). Low complexity predominate over residues 155 to 177 (SCQSMESDSSSSLLNEASKPSSS). Residues 178 to 194 (DTQTLVSPGSHTGTITA) are compositionally biased toward polar residues. Positions 207–266 (TRKKRKPYSKLQLAELEGEFMMNEFITRQRRRELSDRLNLSDQQVKIWFQNRRMKKKRLM) form a DNA-binding region, homeobox.

Belongs to the Abd-B homeobox family.

It is found in the nucleus. Its function is as follows. Sequence-specific transcription factor which is part of a developmental regulatory system that provides cells with specific positional identities on the anterior-posterior axis. This Takifugu rubripes (Japanese pufferfish) protein is Homeobox protein Hox-C12a (hoxc12a).